An 838-amino-acid polypeptide reads, in one-letter code: Protein translocase subunit SecA (838 aa).

ATP contacts are provided by residues Gln-86, 104–108 (GEGKT), and Asp-493. The segment at 793-838 (NTQAVSGGEDSGKKKTKKPVVKSNTVKRNDPCPCGSGKKYKNCHGQ) is disordered. Cys-824, Cys-826, Cys-835, and His-836 together coordinate Zn(2+).

Belongs to the SecA family. As to quaternary structure, monomer and homodimer. Part of the essential Sec protein translocation apparatus which comprises SecA, SecYEG and auxiliary proteins SecDF. Other proteins may also be involved. It depends on Zn(2+) as a cofactor.

It is found in the cell membrane. It localises to the cytoplasm. The enzyme catalyses ATP + H2O + cellular proteinSide 1 = ADP + phosphate + cellular proteinSide 2.. In terms of biological role, part of the Sec protein translocase complex. Interacts with the SecYEG preprotein conducting channel. Has a central role in coupling the hydrolysis of ATP to the transfer of proteins into and across the cell membrane, serving as an ATP-driven molecular motor driving the stepwise translocation of polypeptide chains across the membrane. The sequence is that of Protein translocase subunit SecA from Oceanobacillus iheyensis (strain DSM 14371 / CIP 107618 / JCM 11309 / KCTC 3954 / HTE831).